Consider the following 724-residue polypeptide: MGDEDWEAEINPHMSSYVPIFEKDRYSGENGDNFNRTPASSSEMDDGPSRRDHFMKSGFASGRNFGNRDAGECNKRDNTSTMGGFGVGKSFGNRGFSNSRFEDGDSSGFWRESSNDCEDNPTRNRGFSKRGGYRDGNNSEASGPYRRGGRGSFRGCRGGFGLGSPNNDLDPDECMQRTGGLFGSRRPVLSGTGNGDTSQSRSGSGSERGGYKGLNEEVITGSGKNSWKSEAEGGESSDTQGPKVTYIPPPPPEDEDSIFAHYQTGINFDKYDTILVEVSGHDAPPAILTFEEANLCQTLNNNIAKAGYTKLTPVQKYSIPIILAGRDLMACAQTGSGKTAAFLLPILAHMMHDGITASRFKELQEPECIIVAPTRELVNQIYLEARKFSFGTCVRAVVIYGGTQLGHSIRQIVQGCNILCATPGRLMDIIGKEKIGLKQIKYLVLDEADRMLDMGFGPEMKKLISCPGMPSKEQRQTLMFSATFPEEIQRLAAEFLKSNYLFVAVGQVGGACRDVQQTVLQVGQFSKREKLVEILRNIGDERTMVFVETKKKADFIATFLCQEKISTTSIHGDREQREREQALGDFRFGKCPVLVATSVAARGLDIENVQHVINFDLPSTIDEYVHRIGRTGRCGNTGRAISFFDLESDNHLAQPLVKVLTDAQQDVPAWLEEIAFSTYIPGFSGSTRGNVFASVDTRKGKSTLNTAGFSSSQAPNPVDDESWD.

The tract at residues 1–246 (MGDEDWEAEI…SDTQGPKVTY (246 aa)) is disordered. The segment covering 30 to 42 (NGDNFNRTPASSS) has biased composition (polar residues). The segment covering 69–78 (DAGECNKRDN) has biased composition (basic and acidic residues). Residues 150-162 (RGSFRGCRGGFGL) show a composition bias toward gly residues. The span at 195–205 (GDTSQSRSGSG) shows a compositional bias: low complexity. Phosphoserine occurs at positions 222 and 226. The tract at residues 228–247 (KSEAEGGESSDTQGPKVTYI) is interaction with RANBP9. The Q motif motif lies at 288 to 316 (LTFEEANLCQTLNNNIAKAGYTKLTPVQK). In terms of domain architecture, Helicase ATP-binding spans 319–502 (IPIILAGRDL…AEFLKSNYLF (184 aa)). Residue 332–339 (AQTGSGKT) coordinates ATP. The DEAD box motif lies at 446 to 449 (DEAD). In terms of domain architecture, Helicase C-terminal spans 530 to 675 (KLVEILRNIG…DVPAWLEEIA (146 aa)). A compositionally biased stretch (polar residues) spans 704–715 (LNTAGFSSSQAP). The segment at 704–724 (LNTAGFSSSQAPNPVDDESWD) is disordered. Serine 722 is modified (phosphoserine).

The protein belongs to the DEAD box helicase family. DDX4/VASA subfamily. In terms of assembly, found in a mRNP complex, at least composed of TDRD1, TDRD6, TDRD7 and DDX4. Interacts with RANBP9. Interacts with RANBP10. Interacts with PIWIL2 and MAEL. Interacts with BMAL1 and CLOCK. Interacts with Tex19.1 and, probably, Tex19.2. Interacts with RBM46. As to expression, expressed only in ovary and testis. Expressed in migratory primordial germ cells in the region of the gonadal ridge in both sexes.

Its subcellular location is the cytoplasm. The protein localises to the perinuclear region. It catalyses the reaction ATP + H2O = ADP + phosphate + H(+). ATP-dependent RNA helicase required during spermatogenesis. Required to repress transposable elements and preventing their mobilization, which is essential for the germline integrity. Acts via the piRNA metabolic process, which mediates the repression of transposable elements during meiosis by forming complexes composed of piRNAs and Piwi proteins and governs the methylation and subsequent repression of transposons. Involved in the secondary piRNAs metabolic process, the production of piRNAs in fetal male germ cells through a ping-pong amplification cycle. Required for PIWIL2 slicing-triggered piRNA biogenesis: helicase activity enables utilization of one of the slice cleavage fragments generated by PIWIL2 and processing these pre-piRNAs into piRNAs. The chain is Probable ATP-dependent RNA helicase DDX4 (DDX4) from Homo sapiens (Human).